The sequence spans 534 residues: Benzaldehyde dehydrogenase, mitochondrial (534 aa).

Residues 1-29 (MAAHRFSSLLSRSVPLLSRGGKQSYLGRG) constitute a mitochondrion transit peptide. Residues 199–202 (IPWN), 225–228 (KTAE), 258–259 (GP), 278–279 (GS), and 301–303 (ELG) contribute to the NAD(+) site. The active-site Proton acceptor is E301. Catalysis depends on C335, which acts as the Nucleophile. NAD(+)-binding positions include 381–385 (DQFEK) and 432–434 (EIF).

It belongs to the aldehyde dehydrogenase family. Homotetramer. In terms of tissue distribution, expressed predominantly in the upper and lower flower petal lobes, and, at low levels, in flower tubes, pistils, stamens and sepals.

Its subcellular location is the mitochondrion. It catalyses the reaction an aldehyde + NAD(+) + H2O = a carboxylate + NADH + 2 H(+). The enzyme catalyses acetaldehyde + NAD(+) + H2O = acetate + NADH + 2 H(+). It carries out the reaction benzaldehyde + NAD(+) + H2O = benzoate + NADH + 2 H(+). The catalysed reaction is 2-phenylacetaldehyde + NAD(+) + H2O = 2-phenylacetate + NADH + 2 H(+). The protein operates within aromatic compound metabolism. Inhibited by disulfiram. In terms of biological role, component of the floral volatile benzenoid/phenylpropanoid (FVBP) biosynthetic pathway. Catalyzes the oxidation of benzaldehyde to benzoic acid (BA). Capable of oxidizing a broad spectrum of aliphatic aldehydes; increased carbon chain length results in a decrease in its efficiency. This chain is Benzaldehyde dehydrogenase, mitochondrial, found in Antirrhinum majus (Garden snapdragon).